Here is a 118-residue protein sequence, read N- to C-terminus: DNA-binding protein M164_1799 (118 aa).

It belongs to the PDCD5 family.

This chain is DNA-binding protein M164_1799, found in Saccharolobus islandicus (strain M.16.4 / Kamchatka #3) (Sulfolobus islandicus).